A 371-amino-acid polypeptide reads, in one-letter code: uncharacterized protein (371 aa).

This is an uncharacterized protein from Clostridium acetobutylicum (strain ATCC 824 / DSM 792 / JCM 1419 / IAM 19013 / LMG 5710 / NBRC 13948 / NRRL B-527 / VKM B-1787 / 2291 / W).